Consider the following 209-residue polypeptide: Guanylate kinase (209 aa).

In terms of domain architecture, Guanylate kinase-like spans 9 to 188 (GIMLVISSPS…SVHQIKCIFT (180 aa)). 16 to 23 (SPSGGGKT) lines the ATP pocket.

The protein belongs to the guanylate kinase family.

Its subcellular location is the cytoplasm. It catalyses the reaction GMP + ATP = GDP + ADP. Essential for recycling GMP and indirectly, cGMP. The polypeptide is Guanylate kinase (Ehrlichia canis (strain Jake)).